We begin with the raw amino-acid sequence, 667 residues long: uncharacterized protein (667 aa).

Residues 321-345 form a disordered region; it reads AGEAASSDHDQKISRVTRKRPREPK. Positions 375–552 constitute a Helicase ATP-binding domain; the sequence is EIYMADTPSV…LQRIGLTGLA (178 aa). An ATP-binding site is contributed by 388 to 395; it reads APPGYGKT. A DEAH box motif is present at residues 498–501; the sequence is DEFH.

It belongs to the helicase family. Yeast subtelomeric Y' repeat subfamily.

This is an uncharacterized protein from Saccharomyces cerevisiae (strain ATCC 204508 / S288c) (Baker's yeast).